The following is a 174-amino-acid chain: Variant surface antigen B (174 aa).

A signal peptide spans 1-29 (MKKSIFSKKLLVSFGSLVALASIPLIAIS). C30 carries the N-palmitoyl cysteine lipid modification. Residue C30 is the site of S-diacylglycerol cysteine attachment. The disordered stretch occupies residues 32–174 (QTNTDKSQQP…SQDSGNGSTK (143 aa)). Positions 38 to 49 (SQQPGSGSSTSG) are enriched in low complexity. The span at 50-75 (GQSGTGLGSGTTTGGQSGTTTGGRSG) shows a compositional bias: gly residues. A compositionally biased stretch (low complexity) spans 76–97 (SGSSSSTTGGQTGTGSDSQDSG). A run of 7 repeats spans residues 88–99 (GTGSDSQDSGAK), 100–111 (GTGSDSQDSGAK), 112–123 (GTGSDSQDSGAK), 124–135 (GTGSDSQDSGAK), 136–147 (GTGSDSQDSGAK), 148–159 (GTGSDSQDSGAK), and 160–171 (GTGSDSQDSGNG). The 7 X 12 AA tandem repeats stretch occupies residues 88–171 (GTGSDSQDSG…GSDSQDSGNG (84 aa)). Residues 102 to 174 (GSDSQDSGAK…SQDSGNGSTK (73 aa)) are compositionally biased toward polar residues.

It localises to the cell membrane. Responsible for the antigenic diversity for host adaptation. The polypeptide is Variant surface antigen B (vlpB) (Mesomycoplasma hyorhinis (Mycoplasma hyorhinis)).